Here is a 54-residue protein sequence, read N- to C-terminus: Ovomucoid (54 aa).

One can recognise a Kazal-like domain in the interval 4–54 (VDCSDYPKPACTLEYMPLCGSDNKTYGNRCNFCNAVVDSNGTLTLSHFGKC). 3 disulfide bridges follow: C6–C36, C14–C33, and C22–C54. An N-linked (GlcNAc...) asparagine glycan is attached at N43.

Its subcellular location is the secreted. The polypeptide is Ovomucoid (Dendrocygna viduata (White-faced whistling-duck)).